We begin with the raw amino-acid sequence, 160 residues long: Small ribosomal subunit protein uS7A (160 aa).

Belongs to the universal ribosomal protein uS7 family. As to quaternary structure, part of the 30S ribosomal subunit. Contacts proteins S9 and S11.

Functionally, one of the primary rRNA binding proteins, it binds directly to 16S rRNA where it nucleates assembly of the head domain of the 30S subunit. Is located at the subunit interface close to the decoding center, probably blocks exit of the E-site tRNA. This chain is Small ribosomal subunit protein uS7A, found in Aquifex aeolicus (strain VF5).